The sequence spans 486 residues: N-succinylglutamate 5-semialdehyde dehydrogenase (486 aa).

NAD(+) is bound at residue 220 to 225 (GSSRTG). Catalysis depends on residues Glu243 and Cys277.

It belongs to the aldehyde dehydrogenase family. AstD subfamily.

The catalysed reaction is N-succinyl-L-glutamate 5-semialdehyde + NAD(+) + H2O = N-succinyl-L-glutamate + NADH + 2 H(+). The protein operates within amino-acid degradation; L-arginine degradation via AST pathway; L-glutamate and succinate from L-arginine: step 4/5. Functionally, catalyzes the NAD-dependent reduction of succinylglutamate semialdehyde into succinylglutamate. The polypeptide is N-succinylglutamate 5-semialdehyde dehydrogenase (Shewanella baltica (strain OS223)).